A 209-amino-acid polypeptide reads, in one-letter code: Thymidine kinase (209 aa).

ATP is bound by residues 25–32 (GCMFAGKT) and 103–106 (DEVQ). Glutamate 104 serves as the catalytic Proton acceptor. Zn(2+) contacts are provided by cysteine 160, cysteine 163, cysteine 198, and cysteine 201.

Belongs to the thymidine kinase family. In terms of assembly, homotetramer.

It is found in the cytoplasm. The catalysed reaction is thymidine + ATP = dTMP + ADP + H(+). This is Thymidine kinase from Mycoplasma mycoides subsp. mycoides SC (strain CCUG 32753 / NCTC 10114 / PG1).